Consider the following 384-residue polypeptide: Outer membrane protein assembly factor BamC (384 aa).

The signal sequence occupies residues 1–23 (MNKLNSVVVARGAVAVLLIGLAG). A lipid anchor (N-palmitoyl cysteine) is attached at cysteine 24. Cysteine 24 carries the S-diacylglycerol cysteine lipid modification. Disordered regions lie at residues 47-70 (LEVP…TSGK) and 251-273 (QAAQ…SGTL).

The protein belongs to the BamC family. In terms of assembly, part of the Bam complex.

It localises to the cell outer membrane. Functionally, part of the outer membrane protein assembly complex, which is involved in assembly and insertion of beta-barrel proteins into the outer membrane. The protein is Outer membrane protein assembly factor BamC of Accumulibacter regalis.